A 481-amino-acid polypeptide reads, in one-letter code: uncharacterized protein (481 aa).

The helical transmembrane segment at 18–38 (FMIVTAIAVAIFVVITGVVIF) threads the bilayer.

Its subcellular location is the cell inner membrane. Functionally, involved in DNA conjugation in the recipient strain. This is an uncharacterized protein from Mycolicibacterium smegmatis (strain MKD8) (Mycobacterium smegmatis).